A 491-amino-acid chain; its full sequence is Glutamate--tRNA ligase (491 aa).

The 'HIGH' region signature appears at 9–19 (PSPTGTPHVGL). A 'KMSKS' region motif is present at residues 253 to 257 (KLSKR). Residue Lys256 participates in ATP binding.

It belongs to the class-I aminoacyl-tRNA synthetase family. Glutamate--tRNA ligase type 1 subfamily. As to quaternary structure, monomer.

The protein resides in the cytoplasm. The catalysed reaction is tRNA(Glu) + L-glutamate + ATP = L-glutamyl-tRNA(Glu) + AMP + diphosphate. Functionally, catalyzes the attachment of glutamate to tRNA(Glu) in a two-step reaction: glutamate is first activated by ATP to form Glu-AMP and then transferred to the acceptor end of tRNA(Glu). This chain is Glutamate--tRNA ligase, found in Mycolicibacterium gilvum (strain PYR-GCK) (Mycobacterium gilvum (strain PYR-GCK)).